The sequence spans 520 residues: GMP synthase [glutamine-hydrolyzing] (520 aa).

A Glutamine amidotransferase type-1 domain is found at 9 to 202 (TILIIDFGSQ…VHRIVGVKPG (194 aa)). Cys-86 (nucleophile) is an active-site residue. Residues His-176 and Glu-178 contribute to the active site. The region spanning 203–395 (WTMGAYREQA…LGLPDSFIGR (193 aa)) is the GMPS ATP-PPase domain. Residue 230 to 236 (SGGVDSS) coordinates ATP.

In terms of assembly, homodimer.

The catalysed reaction is XMP + L-glutamine + ATP + H2O = GMP + L-glutamate + AMP + diphosphate + 2 H(+). Its pathway is purine metabolism; GMP biosynthesis; GMP from XMP (L-Gln route): step 1/1. Functionally, catalyzes the synthesis of GMP from XMP. In Brucella ovis (strain ATCC 25840 / 63/290 / NCTC 10512), this protein is GMP synthase [glutamine-hydrolyzing].